The chain runs to 491 residues: Probable aspartyl aminopeptidase (491 aa).

Histidine 90 provides a ligand contact to Zn(2+). Substrate is bound at residue histidine 168. Residue aspartate 278 participates in Zn(2+) binding. Glutamate 315 is a substrate binding site. Zn(2+) is bound by residues glutamate 316 and aspartate 361. Positions 361, 364, 389, and 396 each coordinate substrate. Histidine 455 serves as a coordination point for Zn(2+).

This sequence belongs to the peptidase M18 family. As to quaternary structure, tetrahedron-shaped homododecamer built from six homodimers. Zn(2+) serves as cofactor.

Its subcellular location is the cytoplasm. It catalyses the reaction Release of an N-terminal aspartate or glutamate from a peptide, with a preference for aspartate.. In terms of biological role, likely to play an important role in intracellular protein and peptide metabolism. The polypeptide is Probable aspartyl aminopeptidase (Ricinus communis (Castor bean)).